The following is a 1101-amino-acid chain: Type II inositol polyphosphate 5-phosphatase 15 (1101 aa).

Positions Arg31–Ser40 are enriched in low complexity. Residues Arg31–Lys54 form a disordered region. 6 WD repeats span residues Leu121 to Arg162, Phe180 to Glu219, Ala225 to Leu263, Asp403 to Asp432, Gly433 to Val481, and His483 to Asn519. Catalytic regions lie at residues Asp749–Thr765 and Lys828–Asn843. Residue Lys907 forms a Glycyl lysine isopeptide (Lys-Gly) (interchain with G-Cter in ubiquitin) linkage.

Belongs to the inositol polyphosphate 5-phosphatase family. The cofactor is Mg(2+). As to expression, predominantly expressed in interfascicular fibers and vascular bundles. Expressed in seedlings, stems, roots and flowers. Expressed at lower level in mature leaves.

The enzyme catalyses a 1,2-diacyl-sn-glycero-3-phospho-(1D-myo-inositol-4,5-bisphosphate) + H2O = a 1,2-diacyl-sn-glycero-3-phospho-(1D-myo-inositol 4-phosphate) + phosphate. The catalysed reaction is a 1,2-diacyl-sn-glycero-3-phospho-(1D-myo-inositol-3,4,5-trisphosphate) + H2O = a 1,2-diacyl-sn-glycero-3-phospho-(1D-myo-inositol-3,4-bisphosphate) + phosphate. It carries out the reaction 1D-myo-inositol 1,4,5-trisphosphate + H2O = 1D-myo-inositol 1,4-bisphosphate + phosphate. Its function is as follows. Has phosphatase activity toward PtdIns(4,5)P2, PtdIns(3,4,5)P3 and Ins(1,4,5)P3. Has a higher substrate affinity toward PtdIns(4,5)P2. Required for secondary wall synthesis and actin organization in fiber cells. In Arabidopsis thaliana (Mouse-ear cress), this protein is Type II inositol polyphosphate 5-phosphatase 15.